The following is a 178-amino-acid chain: Ribosome rescue factor SmrB (178 aa).

Residues 99 to 174 (LDLHGLTQMQ…GNAALLILIE (76 aa)) enclose the Smr domain.

Belongs to the SmrB family. Associates with collided ribosomes, but not with correctly translating polysomes.

Its function is as follows. Acts as a ribosome collision sensor. Detects stalled/collided disomes (pairs of ribosomes where the leading ribosome is stalled and a second ribosome has collided with it) and endonucleolytically cleaves mRNA at the 5' boundary of the stalled ribosome. Stalled/collided disomes form a new interface (primarily via the 30S subunits) that binds SmrB. Cleaved mRNA becomes available for tmRNA ligation, leading to ribosomal subunit dissociation and rescue of stalled ribosomes. This is Ribosome rescue factor SmrB from Photorhabdus laumondii subsp. laumondii (strain DSM 15139 / CIP 105565 / TT01) (Photorhabdus luminescens subsp. laumondii).